Consider the following 425-residue polypeptide: NAD kinase 2, mitochondrial (425 aa).

The transit peptide at 1 to 45 directs the protein to the mitochondrion; that stretch reads MDTSAIQQTLVKIYQRQAWQPPRKASKNETTVGKPRELAGGGSPA. The interval 20–46 is disordered; sequence QPPRKASKNETTVGKPRELAGGGSPAD. An N6-acetyllysine; alternate modification is found at Lys-59. Lys-59 bears the N6-succinyllysine; alternate mark. Residue Ser-171 is modified to Phosphoserine. Position 285 is an N6-succinyllysine (Lys-285). Position 300 is an N6-acetyllysine; alternate (Lys-300). At Lys-300 the chain carries N6-succinyllysine; alternate. Ser-350 carries the post-translational modification Phosphoserine. Lys-380 carries the N6-acetyllysine modification.

It belongs to the NAD kinase family. In terms of assembly, homodimer.

It localises to the mitochondrion. The enzyme catalyses NAD(+) + ATP = ADP + NADP(+) + H(+). Its activity is regulated as follows. Inhibited by NADH, NADPH and NADP(+). Mitochondrial NAD(+) kinase that phosphorylates NAD(+) to yield NADP(+). Can use both ATP or inorganic polyphosphate as the phosphoryl donor. In Rattus norvegicus (Rat), this protein is NAD kinase 2, mitochondrial (Nadk2).